The sequence spans 431 residues: Adenylosuccinate synthetase (431 aa).

GTP-binding positions include 12–18 (GDEGKGK) and 40–42 (GHT). Residue aspartate 13 is the Proton acceptor of the active site. Mg(2+) is bound by residues aspartate 13 and glycine 40. Residues 13–16 (DEGK), 38–41 (NAGH), threonine 129, arginine 143, glutamine 224, threonine 239, and arginine 303 each bind IMP. Catalysis depends on histidine 41, which acts as the Proton donor. A substrate-binding site is contributed by 299–305 (VTTGRAR). GTP is bound by residues arginine 305, 331–333 (KLD), and 413–415 (GVG).

This sequence belongs to the adenylosuccinate synthetase family. In terms of assembly, homodimer. The cofactor is Mg(2+).

The protein localises to the cytoplasm. It catalyses the reaction IMP + L-aspartate + GTP = N(6)-(1,2-dicarboxyethyl)-AMP + GDP + phosphate + 2 H(+). The protein operates within purine metabolism; AMP biosynthesis via de novo pathway; AMP from IMP: step 1/2. In terms of biological role, plays an important role in the de novo pathway of purine nucleotide biosynthesis. Catalyzes the first committed step in the biosynthesis of AMP from IMP. The sequence is that of Adenylosuccinate synthetase from Mycolicibacterium vanbaalenii (strain DSM 7251 / JCM 13017 / BCRC 16820 / KCTC 9966 / NRRL B-24157 / PYR-1) (Mycobacterium vanbaalenii).